The following is a 287-amino-acid chain: Transmembrane protein 163 (287 aa).

A disordered region spans residues 1-63; the sequence is METAAGSERR…ESGQFSDGLE (63 aa). Topologically, residues 1 to 86 are cytoplasmic; it reads METAAGSERR…HEAQNYRKKA (86 aa). A phosphoserine mark is found at Ser-11, Ser-53, Ser-55, and Ser-59. Residues 40-70 form a required for interaction with MCOLN1 region; it reads EPPQPEEERQLRISESGQFSDGLEDRGLLES. A helical transmembrane segment spans residues 87–107; sequence LWVSWFSIIVTLALAVAAFTV. Topologically, residues 108 to 114 are extracellular; sequence SVMRYSA. The chain crosses the membrane as a helical span at residues 115–135; sequence SAFGFAFDAILDVLSSAIVLW. The Cytoplasmic segment spans residues 136–148; sequence RYSNAAAVHSAHR. The chain crosses the membrane as a helical span at residues 149 to 169; it reads EYIACVILGVIFLLSSVCIVV. At 170–185 the chain is on the extracellular side; sequence KAIHDLSTKLLPEVDD. Residues 186–206 traverse the membrane as a helical segment; that stretch reads FLFSVSILSGILCSILAVLKF. The Cytoplasmic segment spans residues 207 to 215; it reads MLGKVLTSR. The chain crosses the membrane as a helical span at residues 216 to 236; the sequence is ALITDGFNSLVGGVMGFSILL. Topologically, residues 237–253 are extracellular; it reads SAEVFKHNSAVWYLDGS. The helical transmembrane segment at 254-274 threads the bilayer; that stretch reads IGVLIGLTIFAYGVKLLIDMV. At 275–287 the chain is on the cytoplasmic side; the sequence is PRVRQTRHYEMFE.

This sequence belongs to the TMEM163 family. As to quaternary structure, homodimer. Interacts with MCOLN1/TRPML1. Interacts with SLC30A1, SLC30A2, SLC30A3 and SLC30A4.

Its subcellular location is the cytoplasmic vesicle. It is found in the secretory vesicle. It localises to the synaptic vesicle membrane. The protein resides in the early endosome membrane. The protein localises to the late endosome membrane. Its subcellular location is the lysosome membrane. It is found in the cell membrane. It catalyses the reaction Zn(2+)(in) = Zn(2+)(out). Functionally, zinc ion transporter that mediates zinc efflux and plays a crucial role in intracellular zinc homeostasis. Binds the divalent cations Zn(2+), Ni(2+), and to a minor extent Cu(2+). Is a functional modulator of P2X purinoceptors, including P2RX1, P2RX3, P2RX4 and P2RX7. Plays a role in central nervous system development and is required for myelination, and survival and proliferation of oligodendrocytes. The protein is Transmembrane protein 163 (TMEM163) of Bos taurus (Bovine).